Reading from the N-terminus, the 196-residue chain is GTP cyclohydrolase 1 (196 aa).

Zn(2+) is bound by residues Cys84, His87, and Cys157.

The protein belongs to the GTP cyclohydrolase I family. Toroid-shaped homodecamer, composed of two pentamers of five dimers.

The catalysed reaction is GTP + H2O = 7,8-dihydroneopterin 3'-triphosphate + formate + H(+). It functions in the pathway cofactor biosynthesis; 7,8-dihydroneopterin triphosphate biosynthesis; 7,8-dihydroneopterin triphosphate from GTP: step 1/1. This chain is GTP cyclohydrolase 1, found in Corynebacterium glutamicum (strain R).